A 205-amino-acid chain; its full sequence is Pyridoxine/pyridoxamine 5'-phosphate oxidase (205 aa).

Residues 53–58 (RMVLLK), 68–69 (YT), K75, and Q97 contribute to the FMN site. K58 contacts substrate. Y115, R119, and S123 together coordinate substrate. FMN contacts are provided by residues 132-133 (QS) and W177. 183 to 185 (RLH) contributes to the substrate binding site. R187 serves as a coordination point for FMN.

Belongs to the pyridoxamine 5'-phosphate oxidase family. Homodimer. Requires FMN as cofactor.

It carries out the reaction pyridoxamine 5'-phosphate + O2 + H2O = pyridoxal 5'-phosphate + H2O2 + NH4(+). The enzyme catalyses pyridoxine 5'-phosphate + O2 = pyridoxal 5'-phosphate + H2O2. It participates in cofactor metabolism; pyridoxal 5'-phosphate salvage; pyridoxal 5'-phosphate from pyridoxamine 5'-phosphate: step 1/1. Its pathway is cofactor metabolism; pyridoxal 5'-phosphate salvage; pyridoxal 5'-phosphate from pyridoxine 5'-phosphate: step 1/1. In terms of biological role, catalyzes the oxidation of either pyridoxine 5'-phosphate (PNP) or pyridoxamine 5'-phosphate (PMP) into pyridoxal 5'-phosphate (PLP). This chain is Pyridoxine/pyridoxamine 5'-phosphate oxidase, found in Mesorhizobium japonicum (strain LMG 29417 / CECT 9101 / MAFF 303099) (Mesorhizobium loti (strain MAFF 303099)).